The chain runs to 738 residues: Melanotransferrin (738 aa).

Residues 1–19 (MRGPSGALWLLLALRTVLG) form the signal peptide. Residues 20–30 (GMEVRWCATSD) form an antigenic epitope region. 2 Transferrin-like domains span residues 23–357 (VRWC…GLLC) and 366–706 (LRWC…GMSS). 2 disulfide bridges follow: cysteine 26–cysteine 63 and cysteine 36–cysteine 54. A glycan (N-linked (GlcNAc...) asparagine) is linked at asparagine 38. Fe(3+)-binding residues include aspartate 78 and tyrosine 107. Intrachain disulfides connect cysteine 130-cysteine 216, cysteine 172-cysteine 189, cysteine 186-cysteine 199, and cysteine 257-cysteine 271. A hydrogencarbonate-binding site is contributed by threonine 132. Residue asparagine 135 is glycosylated (N-linked (GlcNAc...) asparagine). Arginine 136, valine 138, and glycine 139 together coordinate hydrogencarbonate. Tyrosine 210 is a Fe(3+) binding site. 3 residues coordinate Fe(3+): histidine 279, serine 421, and tyrosine 451. Phosphoserine; by FAM20C is present on serine 462. N-linked (GlcNAc...) asparagine glycosylation occurs at asparagine 515. Residues tyrosine 556 and histidine 625 each coordinate Fe(3+). A lipid anchor (GPI-anchor amidated cysteine) is attached at cysteine 709. Positions 710-738 (SGAAAPAPGAPLLPLLLPALAARLLPPAL) are cleaved as a propeptide — removed in mature form.

Belongs to the transferrin family. Found predominantly in human melanomas and in certain fetal tissues; also found in liver, epithelium, umbilical chord, placenta and sweat gland ducts.

Its subcellular location is the cell membrane. Its function is as follows. Involved in iron cellular uptake. Seems to be internalized and then recycled back to the cell membrane. Binds a single atom of iron per subunit. Could also bind zinc. This is Melanotransferrin from Homo sapiens (Human).